We begin with the raw amino-acid sequence, 186 residues long: uncharacterized protein (186 aa).

Residues 121–146 form a disordered region; that stretch reads TSPLLKKNKPSSDQDDTSKQSFDQDE.

It belongs to the chlamydial CPn_0422/CT_273/TC_0545 family.

This is an uncharacterized protein from Chlamydia muridarum (strain MoPn / Nigg).